A 167-amino-acid polypeptide reads, in one-letter code: Translation initiation factor IF-3 (167 aa).

The protein belongs to the IF-3 family. As to quaternary structure, monomer.

It localises to the cytoplasm. In terms of biological role, IF-3 binds to the 30S ribosomal subunit and shifts the equilibrium between 70S ribosomes and their 50S and 30S subunits in favor of the free subunits, thus enhancing the availability of 30S subunits on which protein synthesis initiation begins. This chain is Translation initiation factor IF-3, found in Shouchella clausii (strain KSM-K16) (Alkalihalobacillus clausii).